Reading from the N-terminus, the 509-residue chain is MKRALISVSDKNGIVPFAEKLVELGVEIISTGGTKAAFEQAGVPVTGIEEVTEFPEMLDGRVKTLHPAIHGGLLARRDTAEHMEAIAAHDIKPIDLVVVNLYPFQETIQKSGVTLEEAIENIDIGGPSMLRSAAKNYAAVTVVVDTVDYDTVLTELEEHGATTFETRQRLAAKVFRHTAAYDALIAEYLTNITGETFPEKVTLTYNRKQVLRYGENPHQDAAFYTEPGTVENSISSAKQLHGKELSYNNIRDADAALKIASEFTEPVAVAVKHMNPCGVGVGENIEEAYLKAYEADETSIFGGIVALNKEVDAKTAEHMSKIFLEIIIAPSFSEEAFAILTKKKNIRLLTVPFAGSVKGFEKTSVNGGLLIQASDSVIEDTASYEVVTEKQPTEAEMKALIAQWKIVKHVKSNAIVVGSDKQTLGIGAGQMNRIGSALIALEQAGEKAKGAVLASDAFFPMDDTVEAAAKAGITAIIQPGGSIKDKESIAMANKYGISMVLTHVRHFKH.

One can recognise an MGS-like domain in the interval 1 to 144 (MKRALISVSD…KNYAAVTVVV (144 aa)).

It belongs to the PurH family.

It catalyses the reaction (6R)-10-formyltetrahydrofolate + 5-amino-1-(5-phospho-beta-D-ribosyl)imidazole-4-carboxamide = 5-formamido-1-(5-phospho-D-ribosyl)imidazole-4-carboxamide + (6S)-5,6,7,8-tetrahydrofolate. The enzyme catalyses IMP + H2O = 5-formamido-1-(5-phospho-D-ribosyl)imidazole-4-carboxamide. It participates in purine metabolism; IMP biosynthesis via de novo pathway; 5-formamido-1-(5-phospho-D-ribosyl)imidazole-4-carboxamide from 5-amino-1-(5-phospho-D-ribosyl)imidazole-4-carboxamide (10-formyl THF route): step 1/1. Its pathway is purine metabolism; IMP biosynthesis via de novo pathway; IMP from 5-formamido-1-(5-phospho-D-ribosyl)imidazole-4-carboxamide: step 1/1. The chain is Bifunctional purine biosynthesis protein PurH from Listeria monocytogenes serotype 4a (strain HCC23).